The sequence spans 348 residues: N-formyl peptide receptor 2 (348 aa).

Asparagine 1 is a glycosylation site (N-linked (GlcNAc...) asparagine). Topologically, residues 1–24 are extracellular; that stretch reads NFSTPLSEYEEVSYESAGYTVLQI. The chain crosses the membrane as a helical span at residues 25 to 47; that stretch reads LPLVVLGVTFVLGVLGNGLVIWV. The Cytoplasmic portion of the chain corresponds to 48–58; sequence AGFRMTRTVTT. A helical transmembrane segment spans residues 59-80; sequence ICYLNLALADFSFTATLPFLIV. Residues 81–97 are Extracellular-facing; the sequence is SMAMGEKWPFGWFLCKL. A disulfide bridge links cysteine 95 with cysteine 173. Residues 98-118 form a helical membrane-spanning segment; that stretch reads IHIVVDINLFGSVFLIGFIAL. The Cytoplasmic segment spans residues 119 to 137; that stretch reads DRCICVLHPVWAQNHRTVS. The helical transmembrane segment at 138 to 159 threads the bilayer; the sequence is LAMKVIVGPWILALVLTLPVFL. Over 160–202 the chain is Extracellular; that stretch reads FLTTVTIPNGDTYCTFNFASWGGTPEKRLKVAITMLTARGIIR. The chain crosses the membrane as a helical span at residues 203–223; it reads FVIGFSMPMSIVATCYGLIAA. Residues 224-239 lie on the Cytoplasmic side of the membrane; that stretch reads KIHKKGMIKSSRPLRV. A helical membrane pass occupies residues 240-263; that stretch reads LTAVVASFFICWFPFQLVALLSTV. Residues 264–283 are Extracellular-facing; the sequence is WLKEILVDGKYKIINILVNP. Residues 284-303 traverse the membrane as a helical segment; it reads TSSLAFFNSCLNPMLYVFVG. The Cytoplasmic portion of the chain corresponds to 304–348; the sequence is QDFRERLIHSLPTSLERALSEDSAPTNDTAASCASPPAETELQAM. Positions 322-348 are disordered; it reads LSEDSAPTNDTAASCASPPAETELQAM. Residues 326 to 335 show a composition bias toward polar residues; it reads SAPTNDTAAS.

The protein belongs to the G-protein coupled receptor 1 family. Interacts with APP; the interaction takes place at the cell surface and the complex is then rapidly internalized.

The protein localises to the cell membrane. Functionally, low affinity receptor for N-formyl-methionyl peptides, which are powerful neutrophil chemotactic factors. Binding of FMLP to the receptor causes activation of neutrophils. This response is mediated via a G-protein that activates a phosphatidylinositol-calcium second messenger system. Receptor for the chemokine-like protein FAM19A5, mediating FAM19A5-stimulated macrophage chemotaxis and the inhibitory effect on TNFSF11/RANKL-induced osteoclast differentiation. The protein is N-formyl peptide receptor 2 (FPR2) of Macaca mulatta (Rhesus macaque).